The primary structure comprises 395 residues: 8-amino-7-oxononanoate synthase (395 aa).

Arginine 24 provides a ligand contact to substrate. Position 111–112 (111–112 (GF)) interacts with pyridoxal 5'-phosphate. Position 136 (histidine 136) interacts with substrate. Residues serine 184, 209–212 (DDAH), and 240–243 (TLSK) each bind pyridoxal 5'-phosphate. An N6-(pyridoxal phosphate)lysine modification is found at lysine 243. Threonine 357 is a binding site for substrate.

This sequence belongs to the class-II pyridoxal-phosphate-dependent aminotransferase family. BioF subfamily. Homodimer. It depends on pyridoxal 5'-phosphate as a cofactor.

It carries out the reaction 6-carboxyhexanoyl-[ACP] + L-alanine + H(+) = (8S)-8-amino-7-oxononanoate + holo-[ACP] + CO2. Its pathway is cofactor biosynthesis; biotin biosynthesis. Functionally, catalyzes the decarboxylative condensation of pimeloyl-[acyl-carrier protein] and L-alanine to produce 8-amino-7-oxononanoate (AON), [acyl-carrier protein], and carbon dioxide. The polypeptide is 8-amino-7-oxononanoate synthase (Thermoanaerobacter pseudethanolicus (strain ATCC 33223 / 39E) (Clostridium thermohydrosulfuricum)).